A 244-amino-acid chain; its full sequence is MVNPVLVFDQVSLRYNGAPLLENINFTISPGEHICLLGKSGVGKTSLLNCITNTKTISKGTIYFNGIASNNKDYKQLKKQFSFLDQVPNLIDTDFVYDAIWREAKNNLKWWQRLFLVEPQSLREQIIQILEEVNLKEYVTYIIKDLSGGQKQRVEVAKLFFANSQVLLVDEPTTGLDLINAHKIMELIIQFARQKAMTLIFVTHDVEFALKYSDRIIALKNKALVLDQATNKLTKQKLMQIYHD.

The ABC transporter domain maps to 6–241 (LVFDQVSLRY…KLTKQKLMQI (236 aa)). 38-45 (GKSGVGKT) serves as a coordination point for ATP.

The protein belongs to the ABC transporter superfamily.

Its function is as follows. Part of a high-affinity transport system. This is Probable ABC transporter ATP-binding protein p29 (p29) from Mycoplasma pneumoniae (strain ATCC 29342 / M129 / Subtype 1) (Mycoplasmoides pneumoniae).